Reading from the N-terminus, the 742-residue chain is Alcohol dehydrogenase (quinone), dehydrogenase subunit (742 aa).

A signal peptide spans 1–35; it reads MTRPASAKRRSLLGILAAGTICAAALPYAAVPARA. E96 lines the pyrroloquinoline quinone pocket. C142 and C143 are oxidised to a cystine. R148 contacts pyrroloquinoline quinone. E216 contacts Ca(2+). T278 serves as a coordination point for pyrroloquinoline quinone. Ca(2+) contacts are provided by N298 and D343. D343 (proton acceptor) is an active-site residue. K370 and I584 together coordinate pyrroloquinoline quinone. The Cytochrome c domain maps to 636-715; that stretch reads KVVDNGYFQY…AIRQYLIKRA (80 aa). 4 residues coordinate heme c: C649, C652, H653, and M692. The segment covering 722-732 has biased composition (basic and acidic residues); it reads EVDARKNDKNI. The segment at 722–742 is disordered; it reads EVDARKNDKNIPENPTLGINP.

It belongs to the bacterial PQQ dehydrogenase family. As to quaternary structure, the alcohol dehydrogenase multicomponent enzyme system is composed of a dehydrogenase subunit I (AdhA) and a cytochrome c subunit II (AdhB). It depends on pyrroloquinoline quinone as a cofactor. The cofactor is Ca(2+). Heme c serves as cofactor.

It localises to the cell membrane. It carries out the reaction ethanol + a ubiquinone = a ubiquinol + acetaldehyde. Its function is as follows. Dehydrogenase component of the alcohol dehydrogenase multicomponent enzyme system which is involved in the production of acetic acid and in the ethanol oxidase respiratory chain. Quinohemoprotein alcohol dehydrogenase (ADH) catalyzes the oxidation of ethanol to acetaldehyde by transferring electrons to the ubiquinone embedded in the membrane phospholipids. The electrons transfer from ethanol to membranous ubiquinone occurs from pyrroloquinoline quinone (PQQ) to one heme c in subunit I (AdhA), and finally to two heme c in subunit II (AdhB). Besides ubiquinone reduction, ADH also has a ubiquinol (QH2) oxidation reaction which mediates electron transfer from ubiquinol to the non-energy generating bypass oxidase system. The electrons transfer occurs from ubiquinol (QH2) to the additional heme c within subunit II (AdhB). This is Alcohol dehydrogenase (quinone), dehydrogenase subunit from Acetobacter aceti.